A 1282-amino-acid polypeptide reads, in one-letter code: Protein PIR (1282 aa).

As to quaternary structure, binds NAP1 and ROP2, but not ROP8. As to expression, expressed in roots, root hairs, hypocotyls, cotyledons, stems, leaves, trichomes and flowers.

Functionally, involved in regulation of actin and microtubule organization. Part of a WAVE complex that activates the ARP2/3 complex. Interacts with the active form of RHO-family GTPases. This chain is Protein PIR (PIR), found in Arabidopsis thaliana (Mouse-ear cress).